The chain runs to 362 residues: Fructose-bisphosphate aldolase (362 aa).

A dihydroxyacetone phosphate-binding site is contributed by aspartate 33. The D-glyceraldehyde 3-phosphate site is built by serine 35 and threonine 38. A beta-D-fructose 1,6-bisphosphate-binding site is contributed by arginine 42. Lysine 106 provides a ligand contact to D-glyceraldehyde 3-phosphate. Residue lysine 145 coordinates dihydroxyacetone phosphate. D-glyceraldehyde 3-phosphate is bound at residue glutamate 188. The active-site Proton acceptor is glutamate 188. Positions 230, 272, and 273 each coordinate dihydroxyacetone phosphate. The active-site Schiff-base intermediate with dihydroxyacetone phosphate is the lysine 230. Residues 272–274 (SGG) and serine 300 each bind beta-D-fructose 1,6-bisphosphate. Dihydroxyacetone phosphate contacts are provided by glycine 302 and arginine 303. Beta-D-fructose 1,6-bisphosphate is bound at residue arginine 303.

It belongs to the class I fructose-bisphosphate aldolase family. Homotetramer. Interacts with TRAP (via cytoplasmic domain); the interaction prevents substrate binding and thereby inhibits aldolase activity. Interacts with MTRAP (via cytoplasmic domain); MTRAP phosphorylation may increase the binding to FBPA. Interact with RH1 (via cytoplasmic domain). Interacts with RH2b (via cytoplasmic domain). Interacts with RH4 (via cytoplasmic domain). Interacts with AMA1 (via cytoplasmic domain); the interaction is weak, however it may be increased upon AMA1 phosphorylation. Interacts with EBA140 (via cytoplasmic domain); the interaction is weak. Interacts with EBA175 (via cytoplasmic domain); the interaction is weak. Interacts with EBA181 (via cytoplasmic domain); the interaction is weak. Interacts with G-actin and F-actin. May interact with ACT2/actin II; the interaction inhibits FBPA catalytic activity. Interacts with human SLC4A1/band 3 (via N-terminus); the interaction inhibits FBPA catalytic activity.

Its subcellular location is the cytoplasm. The protein resides in the membrane. It localises to the host cell membrane. The catalysed reaction is beta-D-fructose 1,6-bisphosphate = D-glyceraldehyde 3-phosphate + dihydroxyacetone phosphate. Its pathway is carbohydrate degradation; glycolysis; D-glyceraldehyde 3-phosphate and glycerone phosphate from D-glucose: step 4/4. Its activity is regulated as follows. The cytoplasmic tail of TRAP and probably other adhesins acts as a competitive inhibitor as the binding sites of the glycolytic substrate fructose 1,6-bisphosphate and TRAP partially overlap. Inhibited by suramin, an antiparasitic drug used to treat Trypanosome-mediated infection. In terms of biological role, plays a key role in glycolysis by catalyzing the cleavage of fructose 1,6-bisphosphate into dihydroxyacetone phosphate and glyceraldehyde 3-phosphate. Independently of its catalytic activity, connects the actin filaments, and thus the actomyosin motor, to cell surface adhesins of the thrombospondin-related anonymous protein (TRAP), the erythrocyte binding ligand (EBL) and reticulocyte binding homolog (RH) protein families; this interaction is probably involved in transducing the motor force across the parasite surface required for sporozoite and ookinete gliding motility and merozoite invasion. Stimulates actin polymerisation. The sequence is that of Fructose-bisphosphate aldolase from Plasmodium falciparum (isolate K1 / Thailand).